A 180-amino-acid chain; its full sequence is NAD(P)H-quinone oxidoreductase subunit I, chloroplastic (180 aa).

4Fe-4S ferredoxin-type domains follow at residues 55–84 and 95–124; these read GRIH…VDWK and LNYS…MTEE. The [4Fe-4S] cluster site is built by Cys-64, Cys-67, Cys-70, Cys-74, Cys-104, Cys-107, Cys-110, and Cys-114.

Belongs to the complex I 23 kDa subunit family. As to quaternary structure, NDH is composed of at least 16 different subunits, 5 of which are encoded in the nucleus. [4Fe-4S] cluster is required as a cofactor.

The protein resides in the plastid. Its subcellular location is the chloroplast thylakoid membrane. The enzyme catalyses a plastoquinone + NADH + (n+1) H(+)(in) = a plastoquinol + NAD(+) + n H(+)(out). The catalysed reaction is a plastoquinone + NADPH + (n+1) H(+)(in) = a plastoquinol + NADP(+) + n H(+)(out). In terms of biological role, NDH shuttles electrons from NAD(P)H:plastoquinone, via FMN and iron-sulfur (Fe-S) centers, to quinones in the photosynthetic chain and possibly in a chloroplast respiratory chain. The immediate electron acceptor for the enzyme in this species is believed to be plastoquinone. Couples the redox reaction to proton translocation, and thus conserves the redox energy in a proton gradient. The chain is NAD(P)H-quinone oxidoreductase subunit I, chloroplastic from Nandina domestica (Heavenly bamboo).